The sequence spans 80 residues: Metallothionein-like protein 2B (80 aa).

The protein belongs to the metallothionein superfamily. Type 15 family. Highly expressed in stems. Expressed in leaves and rachis.

Metallothioneins have a high content of cysteine residues that bind various heavy metals. The sequence is that of Metallothionein-like protein 2B (MT2B) from Oryza sativa subsp. japonica (Rice).